The chain runs to 136 residues: Nucleoside diphosphate kinase (136 aa).

The ATP site is built by lysine 10, phenylalanine 58, arginine 86, threonine 92, arginine 104, and asparagine 114. Histidine 117 (pros-phosphohistidine intermediate) is an active-site residue.

Belongs to the NDK family. Homotetramer. The cofactor is Mg(2+).

Its subcellular location is the cytoplasm. It carries out the reaction a 2'-deoxyribonucleoside 5'-diphosphate + ATP = a 2'-deoxyribonucleoside 5'-triphosphate + ADP. The enzyme catalyses a ribonucleoside 5'-diphosphate + ATP = a ribonucleoside 5'-triphosphate + ADP. Its function is as follows. Major role in the synthesis of nucleoside triphosphates other than ATP. The ATP gamma phosphate is transferred to the NDP beta phosphate via a ping-pong mechanism, using a phosphorylated active-site intermediate. The polypeptide is Nucleoside diphosphate kinase (Mycobacteroides abscessus (strain ATCC 19977 / DSM 44196 / CCUG 20993 / CIP 104536 / JCM 13569 / NCTC 13031 / TMC 1543 / L948) (Mycobacterium abscessus)).